A 117-amino-acid polypeptide reads, in one-letter code: UPF0122 protein TTE1463 (117 aa).

It belongs to the UPF0122 family.

Might take part in the signal recognition particle (SRP) pathway. This is inferred from the conservation of its genetic proximity to ftsY/ffh. May be a regulatory protein. This chain is UPF0122 protein TTE1463, found in Caldanaerobacter subterraneus subsp. tengcongensis (strain DSM 15242 / JCM 11007 / NBRC 100824 / MB4) (Thermoanaerobacter tengcongensis).